A 445-amino-acid polypeptide reads, in one-letter code: MSAPAAPIPLESRASGPLSGTLRVPGDKSISHRALILGALSVGETRISGLLEGEDVLNTAQAMRALGAKVERHGDFAWTVHGVGVGGFAQPAATLDFGNSGTGCRLVMGAVAGCPITAVFDGDASLRSRPMRRILDPLELIGAKVTASAEGGKLPLTLQGASNPVPVVYRTPVASAQIKSAVLLAGLAAPGVTTVIEQEASRDHTELMLKHFGAEIVTTLEGTHGRRIALTGQPELHGAPVIVPADPSSAAFPLVAALIVDGSDLVLSDVMTNPLRTGLFATLREMGASIEEDDVRGDAGEPMVRLRVRASKLRGVEVPPERAPSMIDEYLVLAVAAAYAEGTTIMRGLHELRVKESDRLEATAAMLRVNGVKVEISDDDLIVEGRGHVPGGGLVATHMDHRIAMSALVMGLASDKPVKVDDTAFIATSFPDFVPLMCKAGADFA.

Positions 28, 29, and 33 each coordinate 3-phosphoshikimate. Lysine 28 contacts phosphoenolpyruvate. Positions 101 and 129 each coordinate phosphoenolpyruvate. Residues serine 175, glutamine 177, aspartate 328, and lysine 355 each coordinate 3-phosphoshikimate. A phosphoenolpyruvate-binding site is contributed by glutamine 177. Aspartate 328 serves as the catalytic Proton acceptor. 2 residues coordinate phosphoenolpyruvate: arginine 359 and arginine 402.

Belongs to the EPSP synthase family. As to quaternary structure, monomer.

The protein localises to the cytoplasm. It carries out the reaction 3-phosphoshikimate + phosphoenolpyruvate = 5-O-(1-carboxyvinyl)-3-phosphoshikimate + phosphate. Its pathway is metabolic intermediate biosynthesis; chorismate biosynthesis; chorismate from D-erythrose 4-phosphate and phosphoenolpyruvate: step 6/7. In terms of biological role, catalyzes the transfer of the enolpyruvyl moiety of phosphoenolpyruvate (PEP) to the 5-hydroxyl of shikimate-3-phosphate (S3P) to produce enolpyruvyl shikimate-3-phosphate and inorganic phosphate. In Bradyrhizobium sp. (strain BTAi1 / ATCC BAA-1182), this protein is 3-phosphoshikimate 1-carboxyvinyltransferase.